We begin with the raw amino-acid sequence, 643 residues long: Phosphomethylpyrimidine synthase (643 aa).

Residues Asn248, Met277, Tyr306, His342, Ser362 to Gly364, Asp403 to Arg406, and Glu442 each bind substrate. His446 lines the Zn(2+) pocket. Tyr469 contacts substrate. Residue His510 coordinates Zn(2+). Cys590, Cys593, and Cys598 together coordinate [4Fe-4S] cluster.

It belongs to the ThiC family. As to quaternary structure, homodimer. [4Fe-4S] cluster is required as a cofactor.

The enzyme catalyses 5-amino-1-(5-phospho-beta-D-ribosyl)imidazole + S-adenosyl-L-methionine = 4-amino-2-methyl-5-(phosphooxymethyl)pyrimidine + CO + 5'-deoxyadenosine + formate + L-methionine + 3 H(+). Its pathway is cofactor biosynthesis; thiamine diphosphate biosynthesis. Its function is as follows. Catalyzes the synthesis of the hydroxymethylpyrimidine phosphate (HMP-P) moiety of thiamine from aminoimidazole ribotide (AIR) in a radical S-adenosyl-L-methionine (SAM)-dependent reaction. The sequence is that of Phosphomethylpyrimidine synthase from Burkholderia cenocepacia (strain ATCC BAA-245 / DSM 16553 / LMG 16656 / NCTC 13227 / J2315 / CF5610) (Burkholderia cepacia (strain J2315)).